The sequence spans 39 residues: Photosystem II reaction center protein J (39 aa).

The helical transmembrane segment at 9 to 29 (LWLVATVGGMAAITVLGIFIY) threads the bilayer.

It belongs to the PsbJ family. In terms of assembly, PSII is composed of 1 copy each of membrane proteins PsbA, PsbB, PsbC, PsbD, PsbE, PsbF, PsbH, PsbI, PsbJ, PsbK, PsbL, PsbM, PsbT, PsbX, PsbY, PsbZ, Psb30/Ycf12, at least 3 peripheral proteins of the oxygen-evolving complex and a large number of cofactors. It forms dimeric complexes.

The protein localises to the plastid. It is found in the chloroplast thylakoid membrane. One of the components of the core complex of photosystem II (PSII). PSII is a light-driven water:plastoquinone oxidoreductase that uses light energy to abstract electrons from H(2)O, generating O(2) and a proton gradient subsequently used for ATP formation. It consists of a core antenna complex that captures photons, and an electron transfer chain that converts photonic excitation into a charge separation. This is Photosystem II reaction center protein J from Porphyra purpurea (Red seaweed).